We begin with the raw amino-acid sequence, 137 residues long: Small ribosomal subunit protein uS12 (137 aa).

Positions 1–43 (MPTINQLVRKGRVSKTKKSDSPALNKGYNSFKKRMTDQNAPQK) are disordered.

This sequence belongs to the universal ribosomal protein uS12 family. In terms of assembly, part of the 30S ribosomal subunit. Contacts proteins S8 and S17. May interact with IF1 in the 30S initiation complex.

With S4 and S5 plays an important role in translational accuracy. Functionally, interacts with and stabilizes bases of the 16S rRNA that are involved in tRNA selection in the A site and with the mRNA backbone. Located at the interface of the 30S and 50S subunits, it traverses the body of the 30S subunit contacting proteins on the other side and probably holding the rRNA structure together. The combined cluster of proteins S8, S12 and S17 appears to hold together the shoulder and platform of the 30S subunit. The chain is Small ribosomal subunit protein uS12 from Oceanobacillus iheyensis (strain DSM 14371 / CIP 107618 / JCM 11309 / KCTC 3954 / HTE831).